We begin with the raw amino-acid sequence, 240 residues long: Demethylmenaquinone methyltransferase (240 aa).

Residues Thr-62, Asp-80, 102–103, and Ser-119 each bind S-adenosyl-L-methionine; that span reads DA.

The protein belongs to the class I-like SAM-binding methyltransferase superfamily. MenG/UbiE family.

The catalysed reaction is a 2-demethylmenaquinol + S-adenosyl-L-methionine = a menaquinol + S-adenosyl-L-homocysteine + H(+). It participates in quinol/quinone metabolism; menaquinone biosynthesis; menaquinol from 1,4-dihydroxy-2-naphthoate: step 2/2. In terms of biological role, methyltransferase required for the conversion of demethylmenaquinol (DMKH2) to menaquinol (MKH2). This chain is Demethylmenaquinone methyltransferase, found in Beutenbergia cavernae (strain ATCC BAA-8 / DSM 12333 / CCUG 43141 / JCM 11478 / NBRC 16432 / NCIMB 13614 / HKI 0122).